The following is a 171-amino-acid chain: UPF0398 protein SPy_1647/M5005_Spy1353 (171 aa).

The protein belongs to the UPF0398 family.

This chain is UPF0398 protein SPy_1647/M5005_Spy1353, found in Streptococcus pyogenes serotype M1.